Here is a 363-residue protein sequence, read N- to C-terminus: Chorismate synthase (363 aa).

Residues Arg-48 and Arg-54 each contribute to the NADP(+) site. FMN is bound by residues 125-127 (RSS), 237-238 (NA), Gly-277, 292-296 (KPTSS), and Arg-318.

This sequence belongs to the chorismate synthase family. Homotetramer. The cofactor is FMNH2.

The enzyme catalyses 5-O-(1-carboxyvinyl)-3-phosphoshikimate = chorismate + phosphate. The protein operates within metabolic intermediate biosynthesis; chorismate biosynthesis; chorismate from D-erythrose 4-phosphate and phosphoenolpyruvate: step 7/7. Its function is as follows. Catalyzes the anti-1,4-elimination of the C-3 phosphate and the C-6 proR hydrogen from 5-enolpyruvylshikimate-3-phosphate (EPSP) to yield chorismate, which is the branch point compound that serves as the starting substrate for the three terminal pathways of aromatic amino acid biosynthesis. This reaction introduces a second double bond into the aromatic ring system. The sequence is that of Chorismate synthase from Pseudomonas entomophila (strain L48).